The sequence spans 180 residues: Negative modulator of initiation of replication (180 aa).

Residues 87-88 (AV) are interaction with DNA.

Belongs to the SeqA family. Homodimer. Polymerizes to form helical filaments.

The protein resides in the cytoplasm. In terms of biological role, negative regulator of replication initiation, which contributes to regulation of DNA replication and ensures that replication initiation occurs exactly once per chromosome per cell cycle. Binds to pairs of hemimethylated GATC sequences in the oriC region, thus preventing assembly of replication proteins and re-initiation at newly replicated origins. Repression is relieved when the region becomes fully methylated. The chain is Negative modulator of initiation of replication from Ferrimonas balearica (strain DSM 9799 / CCM 4581 / KCTC 23876 / PAT).